Here is a 268-residue protein sequence, read N- to C-terminus: Tryptophan synthase alpha chain (268 aa).

Catalysis depends on proton acceptor residues Glu-49 and Asp-60.

The protein belongs to the TrpA family. Tetramer of two alpha and two beta chains.

The enzyme catalyses (1S,2R)-1-C-(indol-3-yl)glycerol 3-phosphate + L-serine = D-glyceraldehyde 3-phosphate + L-tryptophan + H2O. It participates in amino-acid biosynthesis; L-tryptophan biosynthesis; L-tryptophan from chorismate: step 5/5. Functionally, the alpha subunit is responsible for the aldol cleavage of indoleglycerol phosphate to indole and glyceraldehyde 3-phosphate. This Escherichia coli (strain SMS-3-5 / SECEC) protein is Tryptophan synthase alpha chain.